The primary structure comprises 51 residues: uncharacterized protein (51 aa).

Residues 3–30 are a coiled coil; it reads EEKAVSLAKEIIELDIKRDEMLETFMQL.

This is an uncharacterized protein from Bacillus subtilis (strain 168).